The chain runs to 105 residues: Large ribosomal subunit protein eL36 (105 aa).

A disordered region spans residues 9–31 (VGLNKGHKVTKNVSKPRHSRRRR). Residues 13–31 (KGHKVTKNVSKPRHSRRRR) are compositionally biased toward basic residues. Lys62 carries the post-translational modification N6-acetyllysine.

The protein belongs to the eukaryotic ribosomal protein eL36 family. In terms of assembly, component of the large ribosomal subunit.

Its subcellular location is the cytoplasm. It localises to the cytosol. Functionally, component of the large ribosomal subunit. The ribosome is a large ribonucleoprotein complex responsible for the synthesis of proteins in the cell. The protein is Large ribosomal subunit protein eL36 (RPL36) of Oryctolagus cuniculus (Rabbit).